The chain runs to 187 residues: Aspartic protease inhibitor 9 (187 aa).

The N-linked (GlcNAc...) asparagine glycan is linked to Asn19. 2 disulfides stabilise this stretch: Cys48/Cys93 and Cys142/Cys158.

Belongs to the protease inhibitor I3 (leguminous Kunitz-type inhibitor) family. Post-translationally, glycosylated. In terms of tissue distribution, tubers.

Its subcellular location is the vacuole. Functionally, inhibitor of cathepsin D (aspartic protease) and trypsin (serine protease). May protect the plant by inhibiting proteases of invading organisms. The sequence is that of Aspartic protease inhibitor 9 from Solanum tuberosum (Potato).